The chain runs to 216 residues: Octanoyltransferase (216 aa).

In terms of domain architecture, BPL/LPL catalytic spans 24-212 (KFRKECILFL…NLCSFLEPIN (189 aa)). Residues 69–76 (RGGDFTAH), 140–142 (SIG), and 153–155 (GIA) each bind substrate. The Acyl-thioester intermediate role is filled by C171.

The protein belongs to the LipB family.

It localises to the cytoplasm. The catalysed reaction is octanoyl-[ACP] + L-lysyl-[protein] = N(6)-octanoyl-L-lysyl-[protein] + holo-[ACP] + H(+). It functions in the pathway protein modification; protein lipoylation via endogenous pathway; protein N(6)-(lipoyl)lysine from octanoyl-[acyl-carrier-protein]: step 1/2. In terms of biological role, catalyzes the transfer of endogenously produced octanoic acid from octanoyl-acyl-carrier-protein onto the lipoyl domains of lipoate-dependent enzymes. Lipoyl-ACP can also act as a substrate although octanoyl-ACP is likely to be the physiological substrate. The protein is Octanoyltransferase of Leptospira interrogans serogroup Icterohaemorrhagiae serovar Lai (strain 56601).